The chain runs to 489 residues: ATP synthase subunit beta 1 (489 aa).

An ATP-binding site is contributed by 159–166 (GGAGVGKT). A compositionally biased stretch (basic and acidic residues) spans 465-477 (EKSKKAAEDKPKA). A disordered region spans residues 465-489 (EKSKKAAEDKPKAEEDEDATSLHDA).

Belongs to the ATPase alpha/beta chains family. In terms of assembly, F-type ATPases have 2 components, CF(1) - the catalytic core - and CF(0) - the membrane proton channel. CF(1) has five subunits: alpha(3), beta(3), gamma(1), delta(1), epsilon(1). CF(0) has three main subunits: a(1), b(2) and c(9-12). The alpha and beta chains form an alternating ring which encloses part of the gamma chain. CF(1) is attached to CF(0) by a central stalk formed by the gamma and epsilon chains, while a peripheral stalk is formed by the delta and b chains.

It is found in the cell inner membrane. The catalysed reaction is ATP + H2O + 4 H(+)(in) = ADP + phosphate + 5 H(+)(out). Produces ATP from ADP in the presence of a proton gradient across the membrane. The catalytic sites are hosted primarily by the beta subunits. In Marinomonas sp. (strain MWYL1), this protein is ATP synthase subunit beta 1.